The primary structure comprises 1845 residues: Histone-lysine N-methyltransferase, H3 lysine-79 specific (1845 aa).

A compositionally biased stretch (polar residues) spans 1 to 44 (MSTNSTPRKQKLSNSKSLQNSPISPTVKKTNSFPLGNNIPTNIN). Disordered regions lie at residues 1–67 (MSTN…NGIG), 83–306 (PPLP…NKWT), 450–470 (SHDI…NKNK), 486–571 (QKLK…TERK), 585–681 (RKER…NDSY), 741–767 (GETF…KKIE), 862–881 (QTTK…AETE), and 963–1102 (KDNP…SNSL). Low complexity-rich tracts occupy residues 52-67 (NNSN…NGIG), 90-162 (SSSS…QQEP), 191-226 (PSTP…SNNS), and 239-263 (NNNN…NNNN). A compositionally biased stretch (acidic residues) spans 268 to 280 (VIDDDDDDDDDEG). Residues 282–294 (SIKSTHTSTQSTP) show a composition bias toward polar residues. Over residues 295–304 (IRDRRQRDNK) the composition is skewed to basic and acidic residues. Residues 453 to 464 (INNNNNNNNNNK) show a composition bias toward low complexity. Residues 585–679 (RKERERKERK…IEKERREKND (95 aa)) show a composition bias toward basic and acidic residues. The required for interaction with nucleosomes and DNA stretch occupies residues 625-639 (KKKEKEKEKEKEKEK). 4 stretches are compositionally biased toward low complexity: residues 750–763 (NNNN…NNNN), 862–877 (QTTK…TTTT), 972–1011 (NNNR…RNNN), and 1020–1067 (NNNN…NNTI). Basic and acidic residues predominate over residues 1069–1080 (KKIETIKKDINK). Residues 1084–1102 (KTTTTTSSSSSSTSSSNSL) are compositionally biased toward low complexity. The DOT1 domain maps to 1125 to 1446 (FDVGIGVPVT…KDSDIVTDQT (322 aa)). S-adenosyl-L-methionine-binding positions include 1251–1254 (YGEA), 1274–1283 (FCDIGCGIGN), and glutamate 1300. Disordered stretches follow at residues 1463–1559 (LQLF…NKPI), 1610–1661 (RISP…SSND), 1735–1762 (HQKS…KKEQ), 1772–1791 (NYNN…NHNN), and 1799–1845 (TDLI…DNNK). Composition is skewed to low complexity over residues 1467-1522 (SSSS…TPNS), 1541-1556 (NNNN…NSNN), and 1610-1642 (RISP…SSSD). The span at 1643–1656 (NENDDDNGDDEDDS) shows a compositional bias: acidic residues. Basic residues predominate over residues 1745–1759 (RLSRKQKKLAKKNKK). 2 stretches are compositionally biased toward low complexity: residues 1799–1817 (TDLI…INND) and 1835–1845 (KDYNNINDNNK).

Belongs to the class I-like SAM-binding methyltransferase superfamily. DOT1 family.

It localises to the nucleus. It catalyses the reaction L-lysyl(79)-[histone H3] + 3 S-adenosyl-L-methionine = N(6),N(6),N(6)-trimethyl-L-lysyl(79)-[histone H3] + 3 S-adenosyl-L-homocysteine + 3 H(+). Histone methyltransferase that specifically methylates histone H3 to form H3K79me. This methylation is required for telomere silencing, correct growth and development, and for resistance to DNA damage induced by UV LIGHT. This Dictyostelium discoideum (Social amoeba) protein is Histone-lysine N-methyltransferase, H3 lysine-79 specific.